Here is a 490-residue protein sequence, read N- to C-terminus: ATP synthase subunit beta, plastid (490 aa).

170 to 177 (GGAGVGKT) contributes to the ATP binding site.

The protein belongs to the ATPase alpha/beta chains family. In terms of assembly, F-type ATPases have 2 components, CF(1) - the catalytic core - and CF(0) - the membrane proton channel. CF(1) has five subunits: alpha(3), beta(3), gamma(1), delta(1), epsilon(1). CF(0) has four main subunits: a(1), b(1), b'(1) and c(9-12).

The protein localises to the plastid thylakoid membrane. It catalyses the reaction ATP + H2O + 4 H(+)(in) = ADP + phosphate + 5 H(+)(out). In terms of biological role, produces ATP from ADP in the presence of a proton gradient across the membrane. The catalytic sites are hosted primarily by the beta subunits. The sequence is that of ATP synthase subunit beta, plastid from Cuscuta reflexa (Southern Asian dodder).